The following is a 199-amino-acid chain: Charged multivesicular body protein 1B1 (199 aa).

Residues 10–48 (NLKFAAKELNRSSKKCDKEEKAEKAKIKKAIQKGNMEVA) adopt a coiled-coil conformation. An interaction with IST1 region spans residues 132 to 156 (MEDTMSSTTTLTTPQNQVDMLLQEM). The interval 167 to 199 (ELPQGQTGSVGTSVASAEQDELSQRLARLRDQV) is disordered. The span at 170-182 (QGQTGSVGTSVAS) shows a compositional bias: polar residues. Positions 174–199 (GSVGTSVASAEQDELSQRLARLRDQV) are interaction with SPAST. Residues 178–199 (TSVASAEQDELSQRLARLRDQV) are a coiled coil. An interaction with VPS4A, MITD1 and STAMBP region spans residues 180 to 196 (VASAEQDELSQRLARLR). The segment at 180 to 199 (VASAEQDELSQRLARLRDQV) is interaction with VTA1. The interval 183–199 (AEQDELSQRLARLRDQV) is interaction with VPS4B. An MIT-interacting motif motif is present at residues 186 to 196 (DELSQRLARLR).

It belongs to the SNF7 family. As to quaternary structure, probable peripherally associated component of the endosomal sorting required for transport complex III (ESCRT-III). ESCRT-III components are thought to multimerize to form a flat lattice on the perimeter membrane of the endosome. Several assembly forms of ESCRT-III may exist that interact and act sequentially. Interacts with CHMP1A. Interacts with VTA1; the interaction probably involves the open conformation of CHMP1B. Interacts with CHMP2A. Interacts with VPS4A; the interaction is direct. Interacts with VPS4B; the interaction is direct. Interacts with SPAST (via MIT domain); the interaction is direct. Interacts with IST1. Interacts with MITD1. Interacts with STAMBP.

It is found in the cytoplasm. The protein resides in the cytosol. The protein localises to the endosome. Its subcellular location is the late endosome membrane. In terms of biological role, probable peripherally associated component of the endosomal sorting required for transport complex III (ESCRT-III) which is involved in multivesicular bodies (MVBs) formation and sorting of endosomal cargo proteins into MVBs. MVBs contain intraluminal vesicles (ILVs) that are generated by invagination and scission from the limiting membrane of the endosome and mostly are delivered to lysosomes enabling degradation of membrane proteins, such as stimulated growth factor receptors, lysosomal enzymes and lipids. The MVB pathway appears to require the sequential function of ESCRT-O, -I,-II and -III complexes. ESCRT-III proteins mostly dissociate from the invaginating membrane before the ILV is released. The ESCRT machinery also functions in topologically equivalent membrane fission events, such as the terminal stages of cytokinesis. ESCRT-III proteins are believed to mediate the necessary vesicle extrusion and/or membrane fission activities, possibly in conjunction with the AAA ATPase VPS4. Involved in cytokinesis. Involved in recruiting VPS4A and/or VPS4B and SPAST to the midbody of dividing cells. The chain is Charged multivesicular body protein 1B1 from Mus musculus (Mouse).